We begin with the raw amino-acid sequence, 396 residues long: Elongation factor Tu (396 aa).

Residues Lys10–Glu206 enclose the tr-type G domain. The tract at residues Gly19–Thr26 is G1. Gly19 to Thr26 contacts GTP. Thr26 lines the Mg(2+) pocket. Positions Gly60–Asn64 are G2. The interval Asp81–Gly84 is G3. Residues Asp81–His85 and Asn136–Asp139 contribute to the GTP site. The tract at residues Asn136–Asp139 is G4. Residues Ser174–Lys176 are G5.

Belongs to the TRAFAC class translation factor GTPase superfamily. Classic translation factor GTPase family. EF-Tu/EF-1A subfamily. In terms of assembly, monomer.

It is found in the cytoplasm. The catalysed reaction is GTP + H2O = GDP + phosphate + H(+). Functionally, GTP hydrolase that promotes the GTP-dependent binding of aminoacyl-tRNA to the A-site of ribosomes during protein biosynthesis. The protein is Elongation factor Tu of Cupriavidus pinatubonensis (strain JMP 134 / LMG 1197) (Cupriavidus necator (strain JMP 134)).